The sequence spans 347 residues: Large ribosomal subunit protein uL10 (347 aa).

The segment at 312–347 (AAAPAEEEVKKEEEPEEEEEDHAEEDGMAGLGALFG) is disordered. Over residues 325-338 (EPEEEEEDHAEEDG) the composition is skewed to acidic residues.

It belongs to the universal ribosomal protein uL10 family. As to quaternary structure, part of the 50S ribosomal subunit. Forms part of the ribosomal stalk which helps the ribosome interact with GTP-bound translation factors. Forms a heptameric L10(L12)2(L12)2(L12)2 complex, where L10 forms an elongated spine to which the L12 dimers bind in a sequential fashion.

Forms part of the ribosomal stalk, playing a central role in the interaction of the ribosome with GTP-bound translation factors. This chain is Large ribosomal subunit protein uL10, found in Methanosarcina acetivorans (strain ATCC 35395 / DSM 2834 / JCM 12185 / C2A).